We begin with the raw amino-acid sequence, 231 residues long: Somatolactin-1 (231 aa).

The N-terminal stretch at 1 to 24 (MRMIRAIKQGQWAVLLWPYLLTAS) is a signal peptide. 3 disulfide bridges follow: C29/C39, C89/C205, and C222/C230. The N-linked (GlcNAc...) asparagine glycan is linked to N145.

Belongs to the somatotropin/prolactin family. Pituitary gland.

Its subcellular location is the secreted. The sequence is that of Somatolactin-1 from Sparus aurata (Gilthead sea bream).